A 302-amino-acid chain; its full sequence is Recombination-associated protein RdgC (302 aa).

It belongs to the RdgC family.

Its subcellular location is the cytoplasm. It localises to the nucleoid. May be involved in recombination. This is Recombination-associated protein RdgC from Halorhodospira halophila (strain DSM 244 / SL1) (Ectothiorhodospira halophila (strain DSM 244 / SL1)).